A 170-amino-acid polypeptide reads, in one-letter code: Large ribosomal subunit protein bL9 (170 aa).

The interval 149–170 (DGDNEDLDEDNAADENEDYSEE) is disordered.

Belongs to the bacterial ribosomal protein bL9 family.

Binds to the 23S rRNA. This is Large ribosomal subunit protein bL9 from Psychrobacter cryohalolentis (strain ATCC BAA-1226 / DSM 17306 / VKM B-2378 / K5).